The chain runs to 151 residues: D-aminoacyl-tRNA deacylase (151 aa).

Positions 136 to 137 match the Gly-cisPro motif, important for rejection of L-amino acids motif; it reads GP.

Belongs to the DTD family. In terms of assembly, homodimer.

The protein resides in the cytoplasm. The catalysed reaction is glycyl-tRNA(Ala) + H2O = tRNA(Ala) + glycine + H(+). It carries out the reaction a D-aminoacyl-tRNA + H2O = a tRNA + a D-alpha-amino acid + H(+). Functionally, an aminoacyl-tRNA editing enzyme that deacylates mischarged D-aminoacyl-tRNAs. Also deacylates mischarged glycyl-tRNA(Ala), protecting cells against glycine mischarging by AlaRS. Acts via tRNA-based rather than protein-based catalysis; rejects L-amino acids rather than detecting D-amino acids in the active site. By recycling D-aminoacyl-tRNA to D-amino acids and free tRNA molecules, this enzyme counteracts the toxicity associated with the formation of D-aminoacyl-tRNA entities in vivo and helps enforce protein L-homochirality. The polypeptide is D-aminoacyl-tRNA deacylase (Lactococcus lactis subsp. cremoris (strain MG1363)).